The sequence spans 511 residues: Cytochrome P450 4B1 (511 aa).

Residues Glu-315 and Cys-453 each contribute to the heme site.

The protein belongs to the cytochrome P450 family. It depends on heme as a cofactor.

It localises to the endoplasmic reticulum membrane. The protein resides in the microsome membrane. It catalyses the reaction an organic molecule + reduced [NADPH--hemoprotein reductase] + O2 = an alcohol + oxidized [NADPH--hemoprotein reductase] + H2O + H(+). Functionally, cytochromes P450 are a group of heme-thiolate monooxygenases. In liver microsomes, this enzyme is involved in an NADPH-dependent electron transport pathway. It oxidizes a variety of structurally unrelated compounds, including steroids, fatty acids, and xenobiotics. This is Cytochrome P450 4B1 (Cyp4b1) from Rattus norvegicus (Rat).